The primary structure comprises 251 residues: Mast cell protease 3 (251 aa).

An N-terminal signal peptide occupies residues 1–17 (MVLFLLLVALLSPAGEA). A propeptide spans 18–19 (GK) (activation peptide). Residues 20 to 243 (IIGGHEAKPH…FLSWIQRTMR (224 aa)) enclose the Peptidase S1 domain. Cysteine 48 and cysteine 64 form a disulfide bridge. Histidine 63 serves as the catalytic Charge relay system. Asparagine 70 is a glycosylation site (N-linked (GlcNAc...) asparagine). The active-site Charge relay system is aspartate 107. 2 cysteine pairs are disulfide-bonded: cysteine 141–cysteine 207 and cysteine 172–cysteine 186. Serine 201 functions as the Charge relay system in the catalytic mechanism.

It belongs to the peptidase S1 family. Granzyme subfamily.

It is found in the secreted. It localises to the cytoplasmic granule. The protein is Mast cell protease 3 of Ovis aries (Sheep).